We begin with the raw amino-acid sequence, 323 residues long: Ribokinase (323 aa).

Residues 26–28 (MTD), 54–58 (GKGAN), and Glu-155 contribute to the substrate site. ATP-binding positions include Asn-200, 236–241 (TLGASG), and Thr-257. The K(+) site is built by Asp-264 and Thr-266. ATP is bound by residues 269 to 270 (GD) and Asn-296. Asp-270 contributes to the substrate binding site. Asp-270 (proton acceptor) is an active-site residue. Residues Ser-302, Ala-305, Gly-307, and Ser-311 each contribute to the K(+) site.

It belongs to the carbohydrate kinase PfkB family. Ribokinase subfamily. In terms of assembly, homodimer. It depends on Mg(2+) as a cofactor.

It is found in the cytoplasm. The protein localises to the nucleus. The enzyme catalyses D-ribose + ATP = D-ribose 5-phosphate + ADP + H(+). The protein operates within carbohydrate metabolism; D-ribose degradation; D-ribose 5-phosphate from beta-D-ribopyranose: step 2/2. Activated by a monovalent cation that binds near, but not in, the active site. The most likely occupant of the site in vivo is potassium. Ion binding induces a conformational change that may alter substrate affinity. Competitively inhibited by phosphonoacetic acid, etidronate, 2-carboxethylphosphonic acid, N-(phosphonomethyl)glycine, N-(phosphonomethyl)iminodiacetic acid and clodronate. Functionally, catalyzes the phosphorylation of ribose at O-5 in a reaction requiring ATP and magnesium. The resulting D-ribose-5-phosphate can then be used either for sythesis of nucleotides, histidine, and tryptophan, or as a component of the pentose phosphate pathway. The polypeptide is Ribokinase (Mus musculus (Mouse)).